Here is a 195-residue protein sequence, read N- to C-terminus: Killer cell lectin-like receptor subfamily G member 1 (195 aa).

Residues 1-38 (MTDSVIYSMLELPTATQAQNDYGPQQKSSSSRPSCSCL) are Cytoplasmic-facing. An ITIM motif motif is present at residues 5 to 10 (VIYSML). Residues 39–59 (VAIALGLLTAVLLSVLLYQWI) form a helical; Signal-anchor for type II membrane protein membrane-spanning segment. Over 60–195 (LCQGSNYSTC…KCPFADQALF (136 aa)) the chain is Extracellular. N65 is a glycosylation site (N-linked (GlcNAc...) asparagine). C75 and C86 are joined by a disulfide. The C-type lectin domain occupies 82–185 (YGNHCYYFSV…CEVPLHWVCK (104 aa)). Residues N97, N137, and N150 are each glycosylated (N-linked (GlcNAc...) asparagine). 2 cysteine pairs are disulfide-bonded: C103-C184 and C163-C176.

Forms a monomer and homodimer; disulfide-linked. Interacts (via ITIM motif) with PTPN11 and INPP5D. As to expression, expressed specifically on natural killer (NK) cells and T-cells, mainly CD8 T-cells.

The protein localises to the cell membrane. Its function is as follows. Plays an inhibitory role on natural killer (NK) cells and T-cell functions upon binding to their non-MHC ligands. May mediate missing self recognition by binding to a highly conserved site on classical cadherins, enabling it to monitor expression of E-cadherin/CDH1, N-cadherin/CDH2 and R-cadherin/CDH4 on target cells. The sequence is that of Killer cell lectin-like receptor subfamily G member 1 (KLRG1) from Homo sapiens (Human).